A 130-amino-acid polypeptide reads, in one-letter code: Small ribosomal subunit protein uS11c (130 aa).

The protein belongs to the universal ribosomal protein uS11 family. As to quaternary structure, part of the 30S ribosomal subunit.

The protein resides in the plastid. Its subcellular location is the chloroplast. This is Small ribosomal subunit protein uS11c from Anthoceros angustus (Hornwort).